Here is a 209-residue protein sequence, read N- to C-terminus: Imidazoleglycerol-phosphate dehydratase (209 aa).

This sequence belongs to the imidazoleglycerol-phosphate dehydratase family.

The protein localises to the cytoplasm. It carries out the reaction D-erythro-1-(imidazol-4-yl)glycerol 3-phosphate = 3-(imidazol-4-yl)-2-oxopropyl phosphate + H2O. It functions in the pathway amino-acid biosynthesis; L-histidine biosynthesis; L-histidine from 5-phospho-alpha-D-ribose 1-diphosphate: step 6/9. The polypeptide is Imidazoleglycerol-phosphate dehydratase (Nostoc sp. (strain PCC 7120 / SAG 25.82 / UTEX 2576)).